Consider the following 258-residue polypeptide: Kallikrein-1 (258 aa).

The N-terminal stretch at 1–18 (MWFLVLCLALSLGGTGAA) is a signal peptide. A propeptide spans 19–24 (PPIQSR) (activation peptide). In terms of domain architecture, Peptidase S1 spans 25–255 (IVGGWECSQP…YVKWIEDTIA (231 aa)). Intrachain disulfides connect C31-C170, C47-C63, C149-C216, C181-C195, and C206-C231. H62 (charge relay system) is an active-site residue. A glycan (O-linked (GalNAc...) serine) is linked at S90. N-linked (GlcNAc...) asparagine glycosylation occurs at N99. O-linked (GalNAc...) serine glycosylation is present at S101. An N-linked (GlcNAc...) asparagine glycan is attached at N105. The Charge relay system role is filled by D117. N161 carries N-linked (GlcNAc...) asparagine glycosylation. Residue S163 is glycosylated (O-linked (GalNAc...) serine). S210 serves as the catalytic Charge relay system.

The protein belongs to the peptidase S1 family. Kallikrein subfamily.

The enzyme catalyses Preferential cleavage of Arg-|-Xaa bonds in small molecule substrates. Highly selective action to release kallidin (lysyl-bradykinin) from kininogen involves hydrolysis of Met-|-Xaa or Leu-|-Xaa.. In terms of biological role, glandular kallikreins cleave Met-Lys and Arg-Ser bonds in kininogen to release Lys-bradykinin. This chain is Kallikrein-1 (KLK1), found in Papio hamadryas (Hamadryas baboon).